The following is a 642-amino-acid chain: LIM domain kinase 2 (642 aa).

LIM zinc-binding domains follow at residues 12-63 and 72-124; these read CLGC…CHKD and CHGC…CGKC. The region spanning 152–239 is the PDZ domain; sequence LISMPAATDG…TLQLLIEHDP (88 aa). The disordered stretch occupies residues 282–304; that stretch reads RSLRRSNSISKSPGPSSPKEPLL. Low complexity predominate over residues 286 to 304; the sequence is RSNSISKSPGPSSPKEPLL. Positions 331–608 constitute a Protein kinase domain; the sequence is LIHGEVLGKG…DSFEALSLYL (278 aa). Residues 337–345 and lysine 360 each bind ATP; that span reads LGKGFFGQA. Residue aspartate 451 is part of the active site. Threonine 505 carries the post-translational modification Phosphothreonine.

This sequence belongs to the protein kinase superfamily. TKL Ser/Thr protein kinase family. Binds ROCK1 and LKAP. As to expression, expressed predominantly in the lung, and faintly in the kidney, liver, brain, spleen, gizzard, and intestine.

Its subcellular location is the cytoplasm. It is found in the cytoskeleton. It localises to the spindle. The protein localises to the microtubule organizing center. The protein resides in the centrosome. The catalysed reaction is L-seryl-[protein] + ATP = O-phospho-L-seryl-[protein] + ADP + H(+). It catalyses the reaction L-threonyl-[protein] + ATP = O-phospho-L-threonyl-[protein] + ADP + H(+). In terms of biological role, serine/threonine-protein kinase that plays an essential role in the regulation of actin filament dynamics. Acts downstream of several Rho family GTPase signal transduction pathways. Involved in astral microtubule organization and mitotic spindle orientation during early stages of mitosis by mediating phosphorylation of TPPP. The sequence is that of LIM domain kinase 2 (LIMK2) from Gallus gallus (Chicken).